The chain runs to 347 residues: Heat-inducible transcription repressor HrcA (347 aa).

It belongs to the HrcA family.

Negative regulator of class I heat shock genes (grpE-dnaK-dnaJ and groELS operons). Prevents heat-shock induction of these operons. The chain is Heat-inducible transcription repressor HrcA from Mycoplasmopsis pulmonis (strain UAB CTIP) (Mycoplasma pulmonis).